A 314-amino-acid chain; its full sequence is Homoserine kinase (314 aa).

95–105 (PHSRGLGSSAS) contacts ATP.

It belongs to the GHMP kinase family. Homoserine kinase subfamily.

It is found in the cytoplasm. The enzyme catalyses L-homoserine + ATP = O-phospho-L-homoserine + ADP + H(+). It functions in the pathway amino-acid biosynthesis; L-threonine biosynthesis; L-threonine from L-aspartate: step 4/5. Catalyzes the ATP-dependent phosphorylation of L-homoserine to L-homoserine phosphate. The sequence is that of Homoserine kinase from Rhodococcus erythropolis (strain PR4 / NBRC 100887).